The primary structure comprises 372 residues: Fatty acid 2-hydroxylase (372 aa).

The Cytochrome b5 heme-binding domain occupies 8–86; the sequence is AASFSPSEVQ…LEQYYVGELR (79 aa). Residues H43 and H69 each contribute to the heme site. Helical transmembrane passes span 168 to 188 and 213 to 233; these read VWYS…WSYY and SMFP…EYLI. In terms of domain architecture, Fatty acid hydroxylase spans 219–361; the sequence is FMLGTFLWSL…TKLWDYCFHT (143 aa). Zn(2+)-binding residues include H234, H239, H257, H260, and H261. Helical transmembrane passes span 268 to 288 and 290 to 310; these read SRLV…YLCM and LILP…GYVL. 5 residues coordinate Zn(2+): H315, H319, H336, H339, and H340.

Belongs to the sterol desaturase family. SCS7 subfamily. It depends on Zn(2+) as a cofactor. In terms of tissue distribution, detected in differentiating cultured keratinocytes (at protein level). Detected in epidermis and cultured keratinocytes. Highly expressed in brain and colon. Detected at lower levels in testis, prostate, pancreas and kidney.

The protein localises to the endoplasmic reticulum membrane. It is found in the microsome membrane. It catalyses the reaction a 1,2-saturated fatty acid + 2 Fe(II)-[cytochrome b5] + O2 + 2 H(+) = a (R)-2-hydroxy fatty acid + 2 Fe(III)-[cytochrome b5] + H2O. It carries out the reaction hexadecanoate + 2 Fe(II)-[cytochrome b5] + O2 + 2 H(+) = (R)-2-hydroxyhexadecanoate + 2 Fe(III)-[cytochrome b5] + H2O. The enzyme catalyses octadecanoate + 2 Fe(II)-[cytochrome b5] + O2 + 2 H(+) = (R)-2-hydroxyoctadecanoate + 2 Fe(III)-[cytochrome b5] + H2O. The catalysed reaction is docosanoate + 2 Fe(II)-[cytochrome b5] + O2 + 2 H(+) = 2-hydroxydocosanoate + 2 Fe(III)-[cytochrome b5] + H2O. It catalyses the reaction tetracosanoate + 2 Fe(II)-[cytochrome b5] + O2 + 2 H(+) = (R)-2-hydroxytetracosanoate + 2 Fe(III)-[cytochrome b5] + H2O. It participates in lipid metabolism; fatty acid metabolism. The protein operates within sphingolipid metabolism; galactosylceramide biosynthesis. Functionally, catalyzes the hydroxylation of free fatty acids at the C-2 position to produce 2-hydroxy fatty acids, which are building blocks of sphingolipids and glycosphingolipids common in neural tissue and epidermis. FA2H is stereospecific for the production of (R)-2-hydroxy fatty acids. Plays an essential role in the synthesis of galactosphingolipids of the myelin sheath. Responsible for the synthesis of sphingolipids and glycosphingolipids involved in the formation of epidermal lamellar bodies critical for skin permeability barrier. Participates in the synthesis of glycosphingolipids and a fraction of type II wax diesters in sebaceous gland, specifically regulating hair follicle homeostasis. Involved in the synthesis of sphingolipids of plasma membrane rafts, controlling lipid raft mobility and trafficking of raft-associated proteins. This Homo sapiens (Human) protein is Fatty acid 2-hydroxylase.